We begin with the raw amino-acid sequence, 23 residues long: Aurein-4.2 (23 aa).

The protein belongs to the frog skin active peptide (FSAP) family. Aurein subfamily. In terms of tissue distribution, expressed by the skin dorsal glands.

It localises to the secreted. In terms of biological role, has no antimicrobial or anticancer activity. This Ranoidea aurea (Green and golden bell frog) protein is Aurein-4.2.